Here is a 486-residue protein sequence, read N- to C-terminus: Non-structural protein 1 (486 aa).

The tract at residues 1-81 (MATFKDACYQ…CFLDDNPHLL (81 aa)) is RNA-binding. Residues 42 to 79 (CLDCCQYTDLTYCQGCLIYHVCEWCSQYSRCFLDDNPH) are zinc-binding domain. Residues 82–176 (RMRTFRNEIT…INQTPFSFTN (95 aa)) form an important for cytoskeleton localization region. Residues 317–486 (EVHNCKWCSI…EHDSGVSDVE (170 aa)) form an interaction with host IRF3 region. The IKBKB-like degron (ILD) motif signature appears at 479–483 (DSGVS). Residues 480-483 (SGVS) carry the pLxIS motif motif.

It belongs to the rotavirus NSP1 family. Interacts (via C-terminus) with host IRF3; this interaction leads to IRF3 degradation. Interacts with host IRF7; this interaction leads to IRF7 degradation. Interacts with host CUL1 and CUL3. Interacts with host BTRC. The C-terminal region is phosphorylated by host CKII/CSNK2A1. Phosphorylation of the DSGXS motif is essential for host NF-kappa-B inhibition.

It is found in the host cytoplasm. The protein resides in the host cytoskeleton. Its function is as follows. Plays a role in the inhibition of host innate immunity by inducing the degradation of key host factors required to activate interferon production such as IRF3, IRF5 or IRF7. Associates with components of cullin RING ligases (CRLs) including CUL1 or CUL3, which are essential multisubunit ubiquitination complexes, to modulate their activities. Recognizes the host NF-kappa-B regulator BTRC through the presence of a DSGXS motif in the C-terminal substrate recognition domain. The polypeptide is Non-structural protein 1 (Rotavirus A (strain RVA/Human/Philippines/L26/1987/G12P1B[4]) (RV-A)).